Here is a 1488-residue protein sequence, read N- to C-terminus: Chromosome partition protein MukB (1488 aa).

ATP is bound at residue 34 to 41; sequence GGNGAGKS. Coiled coils occupy residues 326–418, 444–472, and 509–602; these read LEAD…QYNQ, LDTF…QTAH, and RHLA…QRAP. Residues 666-783 form a flexible hinge region; the sequence is PGGAEDQRLN…SLPIFGRAAR (118 aa). Coiled coils occupy residues 835–923, 977–1116, and 1209–1265; these read EAEI…AKLE, EMLS…AKAG, and VEAI…LQSV. The disordered stretch occupies residues 1049 to 1074; it reads ADSGAEERARQRRDELHAQLSNNRSR. Basic and acidic residues predominate over residues 1051 to 1065; that stretch reads SGAEERARQRRDELH.

The protein belongs to the SMC family. MukB subfamily. Homodimerization via its hinge domain. Binds to DNA via its C-terminal region. Interacts, and probably forms a ternary complex, with MukE and MukF via its C-terminal region. The complex formation is stimulated by calcium or magnesium. Interacts with tubulin-related protein FtsZ.

The protein localises to the cytoplasm. It localises to the nucleoid. Functionally, plays a central role in chromosome condensation, segregation and cell cycle progression. Functions as a homodimer, which is essential for chromosome partition. Involved in negative DNA supercoiling in vivo, and by this means organize and compact chromosomes. May achieve or facilitate chromosome segregation by condensation DNA from both sides of a centrally located replisome during cell division. This chain is Chromosome partition protein MukB, found in Salmonella schwarzengrund (strain CVM19633).